Consider the following 370-residue polypeptide: Platelet-derived growth factor D (370 aa).

The first 23 residues, 1–23 (MQRLVLVSILLCANFSCYPDTFA), serve as a signal peptide directing secretion. Positions 52-170 (REENIQVTSN…PGFKIYYSFV (119 aa)) constitute a CUB domain. A disulfide bridge connects residues C109 and C131. N-linked (GlcNAc...) asparagine glycosylation occurs at N276. 2 disulfides stabilise this stretch: C302-C360 and C306-C362.

This sequence belongs to the PDGF/VEGF growth factor family. Homodimer; disulfide-linked. Interacts with PDGFRB homodimers, and with heterodimers formed by PDGFRA and PDGFRB. Post-translationally, activated by proteolytic cleavage. Proteolytic removal of the N-terminal CUB domain releasing the core domain is necessary for unmasking the receptor-binding epitopes of the core domain. Cleavage after Arg-247 or Arg-249 by urokinase plasminogen activator gives rise to the active form. Expressed at high levels in developing heart, lung, kidney and some muscle derivatives. Moderately expressed in liver, brain and testis. In the kidney, localized to glomerular mesangial cells and vascular smooth muscle cells. Up-regulated in areas of renal fibrosis. In mice with unilateral ureteral obstruction, expressed in interstitial cells at day 4, with an increased to maximal expression at day 14.

The protein resides in the secreted. Functionally, growth factor that plays an essential role in the regulation of embryonic development, cell proliferation, cell migration, survival and chemotaxis. Potent mitogen for cells of mesenchymal origin. Plays an important role in wound healing. Has oncogenic potential and can induce tumor formation. Induces macrophage recruitment, increased interstitial pressure, and blood vessel maturation during angiogenesis. Can initiate events that lead to a mesangial proliferative glomerulonephritis, including influx of monocytes and macrophages and production of extracellular matrix. The polypeptide is Platelet-derived growth factor D (Pdgfd) (Mus musculus (Mouse)).